A 320-amino-acid polypeptide reads, in one-letter code: Cytochrome f (320 aa).

The signal sequence occupies residues Met-1 to Ala-35. Heme-binding residues include Tyr-36, Cys-56, Cys-59, and His-60. Residues Val-286–Lys-306 form a helical membrane-spanning segment.

The protein belongs to the cytochrome f family. As to quaternary structure, the 4 large subunits of the cytochrome b6-f complex are cytochrome b6, subunit IV (17 kDa polypeptide, petD), cytochrome f and the Rieske protein, while the 4 small subunits are PetG, PetL, PetM and PetN. The complex functions as a dimer. Requires heme as cofactor.

The protein localises to the plastid. Its subcellular location is the chloroplast thylakoid membrane. In terms of biological role, component of the cytochrome b6-f complex, which mediates electron transfer between photosystem II (PSII) and photosystem I (PSI), cyclic electron flow around PSI, and state transitions. In Olimarabidopsis pumila (Dwarf rocket), this protein is Cytochrome f.